We begin with the raw amino-acid sequence, 257 residues long: Phosphatidylglycerol--prolipoprotein diacylglyceryl transferase (257 aa).

7 consecutive transmembrane segments (helical) span residues 13-33, 49-69, 88-108, 123-143, 152-172, 186-202, and 223-243; these read FGPI…AVGG, FLLN…RLMF, IYEG…AGLY, FAVV…IFNH, FFFG…FLLI, YQFW…RGVF, and IGLF…AYWM. R136 is a binding site for a 1,2-diacyl-sn-glycero-3-phospho-(1'-sn-glycerol).

Belongs to the Lgt family.

The protein localises to the cell membrane. The catalysed reaction is L-cysteinyl-[prolipoprotein] + a 1,2-diacyl-sn-glycero-3-phospho-(1'-sn-glycerol) = an S-1,2-diacyl-sn-glyceryl-L-cysteinyl-[prolipoprotein] + sn-glycerol 1-phosphate + H(+). The protein operates within protein modification; lipoprotein biosynthesis (diacylglyceryl transfer). Its function is as follows. Catalyzes the transfer of the diacylglyceryl group from phosphatidylglycerol to the sulfhydryl group of the N-terminal cysteine of a prolipoprotein, the first step in the formation of mature lipoproteins. The chain is Phosphatidylglycerol--prolipoprotein diacylglyceryl transferase from Caldanaerobacter subterraneus subsp. tengcongensis (strain DSM 15242 / JCM 11007 / NBRC 100824 / MB4) (Thermoanaerobacter tengcongensis).